A 436-amino-acid polypeptide reads, in one-letter code: Hydrogenobyrinate a,c-diamide synthase (436 aa).

The 192-residue stretch at 244–435 (HIAVARDDAF…MHVIDFCGEK (192 aa)) folds into the GATase cobBQ-type domain. The Nucleophile role is filled by Cys-327.

It belongs to the CobB/CbiA family. It depends on Mg(2+) as a cofactor.

The catalysed reaction is hydrogenobyrinate + 2 L-glutamine + 2 ATP + 2 H2O = hydrogenobyrinate a,c-diamide + 2 L-glutamate + 2 ADP + 2 phosphate + 2 H(+). It functions in the pathway cofactor biosynthesis; adenosylcobalamin biosynthesis; cob(II)yrinate a,c-diamide from precorrin-2 (aerobic route): step 9/10. Its function is as follows. Catalyzes the ATP-dependent amidation of the two carboxylate groups at positions a and c of hydrogenobyrinate, using either L-glutamine or ammonia as the nitrogen source. The polypeptide is Hydrogenobyrinate a,c-diamide synthase (Brucella anthropi (strain ATCC 49188 / DSM 6882 / CCUG 24695 / JCM 21032 / LMG 3331 / NBRC 15819 / NCTC 12168 / Alc 37) (Ochrobactrum anthropi)).